Consider the following 375-residue polypeptide: Alcohol dehydrogenase 1 (375 aa).

Ser-2 is modified (N-acetylserine). Residues Cys-47, His-68, Cys-98, Cys-101, Cys-104, Cys-112, and Cys-175 each contribute to the Zn(2+) site. Residues 200–205 (WSGRVG), Asp-224, and Lys-229 contribute to the NAD(+) site. Lys-234 is modified (N6-succinyllysine). Position 293–295 (293–295 (VGV)) interacts with NAD(+). Lys-340 carries the N6-succinyllysine modification. NAD(+) is bound at residue Arg-370.

Belongs to the zinc-containing alcohol dehydrogenase family. Class-I subfamily. In terms of assembly, homodimer. Zn(2+) is required as a cofactor.

It is found in the cytoplasm. The enzyme catalyses a primary alcohol + NAD(+) = an aldehyde + NADH + H(+). It catalyses the reaction a secondary alcohol + NAD(+) = a ketone + NADH + H(+). The protein is Alcohol dehydrogenase 1 (ADH1) of Geomys bursarius (Plains pocket gopher).